The primary structure comprises 92 residues: Large ribosomal subunit protein eL31 (92 aa).

The protein belongs to the eukaryotic ribosomal protein eL31 family.

The sequence is that of Large ribosomal subunit protein eL31 from Pyrobaculum arsenaticum (strain DSM 13514 / JCM 11321 / PZ6).